We begin with the raw amino-acid sequence, 356 residues long: Ion-translocating oxidoreductase complex subunit D (356 aa).

4 helical membrane-spanning segments follow: residues 20-40, 42-62, 68-88, and 117-137; these read LMLL…WFFG, GVLV…ALAI, PVGF…IGVS, and GFNP…SFPV. An FMN phosphoryl threonine modification is found at Thr-177. Helical transmembrane passes span 205 to 225, 229 to 249, 259 to 279, 292 to 312, and 315 to 335; these read WASA…LYLL, VYTW…AALF, GSPL…FIVT, VIYG…GSSY, and GVAF…YYTT.

This sequence belongs to the NqrB/RnfD family. As to quaternary structure, the complex is composed of six subunits: RnfA, RnfB, RnfC, RnfD, RnfE and RnfG. FMN is required as a cofactor.

Its subcellular location is the cell inner membrane. Part of a membrane-bound complex that couples electron transfer with translocation of ions across the membrane. This Cellvibrio japonicus (strain Ueda107) (Pseudomonas fluorescens subsp. cellulosa) protein is Ion-translocating oxidoreductase complex subunit D.